A 291-amino-acid polypeptide reads, in one-letter code: Arabinogalactan O-methyltransferase 2 (291 aa).

The helical transmembrane segment at 18–38 threads the bilayer; sequence WFLAVALAGLIGGAMLITSFI.

It belongs to the methyltransferase superfamily.

It localises to the golgi apparatus membrane. Its function is as follows. Involved in the methylation of glucuronic acid of different plant cell wall component, but mainly on side chains of arabinogalactans. This is Arabinogalactan O-methyltransferase 2 from Arabidopsis thaliana (Mouse-ear cress).